The sequence spans 567 residues: Urease subunit alpha 1 (567 aa).

Positions 128–567 (GAVDTHVHYI…LPLAQLYHLF (440 aa)) constitute a Urease domain. 3 residues coordinate Ni(2+): His133, His135, and Lys216. Lys216 carries the post-translational modification N6-carboxylysine. A substrate-binding site is contributed by His218. Ni(2+)-binding residues include His245 and His271. His319 acts as the Proton donor in catalysis. Residue Asp359 participates in Ni(2+) binding.

This sequence belongs to the metallo-dependent hydrolases superfamily. Urease alpha subunit family. In terms of assembly, heterotrimer of UreA (gamma), UreB (beta) and UreC (alpha) subunits. Three heterotrimers associate to form the active enzyme. Ni cation is required as a cofactor. Carboxylation allows a single lysine to coordinate two nickel ions.

The protein localises to the cytoplasm. The catalysed reaction is urea + 2 H2O + H(+) = hydrogencarbonate + 2 NH4(+). The protein operates within nitrogen metabolism; urea degradation; CO(2) and NH(3) from urea (urease route): step 1/1. This Psychrobacter cryohalolentis (strain ATCC BAA-1226 / DSM 17306 / VKM B-2378 / K5) protein is Urease subunit alpha 1.